The primary structure comprises 153 residues: Nucleoside diphosphate kinase (153 aa).

ATP-binding residues include K12, F60, R88, T94, R105, and N115. Catalysis depends on H118, which acts as the Pros-phosphohistidine intermediate.

It belongs to the NDK family. It depends on Mg(2+) as a cofactor.

It is found in the cytoplasm. The catalysed reaction is a 2'-deoxyribonucleoside 5'-diphosphate + ATP = a 2'-deoxyribonucleoside 5'-triphosphate + ADP. The enzyme catalyses a ribonucleoside 5'-diphosphate + ATP = a ribonucleoside 5'-triphosphate + ADP. Major role in the synthesis of nucleoside triphosphates other than ATP. The ATP gamma phosphate is transferred to the NDP beta phosphate via a ping-pong mechanism, using a phosphorylated active-site intermediate. The sequence is that of Nucleoside diphosphate kinase from Natronomonas pharaonis (strain ATCC 35678 / DSM 2160 / CIP 103997 / JCM 8858 / NBRC 14720 / NCIMB 2260 / Gabara) (Halobacterium pharaonis).